Here is a 289-residue protein sequence, read N- to C-terminus: 4-hydroxy-tetrahydrodipicolinate synthase (289 aa).

Position 43 (Thr43) interacts with pyruvate. Tyr131 (proton donor/acceptor) is an active-site residue. Lys160 (schiff-base intermediate with substrate) is an active-site residue. Val200 provides a ligand contact to pyruvate.

The protein belongs to the DapA family. As to quaternary structure, homotetramer; dimer of dimers.

The protein resides in the cytoplasm. The enzyme catalyses L-aspartate 4-semialdehyde + pyruvate = (2S,4S)-4-hydroxy-2,3,4,5-tetrahydrodipicolinate + H2O + H(+). Its pathway is amino-acid biosynthesis; L-lysine biosynthesis via DAP pathway; (S)-tetrahydrodipicolinate from L-aspartate: step 3/4. Its function is as follows. Catalyzes the condensation of (S)-aspartate-beta-semialdehyde [(S)-ASA] and pyruvate to 4-hydroxy-tetrahydrodipicolinate (HTPA). The protein is 4-hydroxy-tetrahydrodipicolinate synthase of Methanococcus maripaludis (strain C5 / ATCC BAA-1333).